A 790-amino-acid polypeptide reads, in one-letter code: MRTYRYFLLLFWVGQPYPTLSTPLSKRTSGFPAKKRALELSGNSKNELNRSKRSWMWNQFFLLEEYTGSDYQYVGKLHSDQDRGDGSLKYILSGDGAGDLFIINENTGDIQATKRLDREEKPVYILRAQAINRRTGRPVEPESEFIIKIHDINDNEPIFTKEVYTATVPEMSDVGTFVVQVTATDADDPTYGNSAKVVYSILQGQPYFSVESETGIIKTALLNMDRENREQYQVVIQAKDMGGQMGGLSGTTTVNITLTDVNDNPPRFPQSTYQFKTPESSPPGTPIGRIKASDADVGENAEIEYSITDGEGLDMFDVITDQETQEGIITVKKLLDFEKKKVYTLKVEASNPYVEPRFLYLGPFKDSATVRIVVEDVDEPPVFSKLAYILQIREDAQINTTIGSVTAQDPDAARNPVKYSVDRHTDMDRIFNIDSGNGSIFTSKLLDRETLLWHNITVIATEINNPKQSSRVPLYIKVLDVNDNAPEFAEFYETFVCEKAKADQLIQTLHAVDKDDPYSGHQFSFSLAPEAASGSNFTIQDNKDNTAGILTRKNGYNRHEMSTYLLPVVISDNDYPVQSSTGTVTVRVCACDHHGNMQSCHAEALIHPTGLSTGALVAILLCIVILLVTVVLFAALRRQRKKEPLIISKEDIRDNIVSYNDEGGGEEDTQAFDIGTLRNPEAIEDNKLRRDIVPEALFLPRRTPTARDNTDVRDFINQRLKENDTDPTAPPYDSLATYAYEGTGSVADSLSSLESVTTDADQDYDYLSDWGPRFKKLADMYGGVDSDKDS.

The signal sequence occupies residues 1-18 (MRTYRYFLLLFWVGQPYP). A propeptide spanning residues 19-53 (TLSTPLSKRTSGFPAKKRALELSGNSKNELNRSKR) is cleaved from the precursor. An N-linked (GlcNAc...) asparagine glycan is attached at N49. Cadherin domains lie at 54–159 (SWMW…EPIF), 160–268 (TKEV…PPRF), 269–383 (PQST…PPVF), 384–486 (SKLA…DNAP), and 487–608 (EFAE…LIHP). At 54–615 (SWMWNQFFLL…IHPTGLSTGA (562 aa)) the chain is on the extracellular side. A glycan (N-linked (GlcNAc...) asparagine) is linked at N255. The disordered stretch occupies residues 259–288 (TDVNDNPPRFPQSTYQFKTPESSPPGTPIG). The span at 269 to 279 (PQSTYQFKTPE) shows a compositional bias: polar residues. 4 N-linked (GlcNAc...) asparagine glycosylation sites follow: N399, N437, N455, and N536. A helical transmembrane segment spans residues 616–636 (LVAILLCIVILLVTVVLFAAL). Topologically, residues 637–790 (RRQRKKEPLI…YGGVDSDKDS (154 aa)) are cytoplasmic. A phosphoserine mark is found at S786 and S790.

As to expression, highly expressed in brain, cerebellum, and kidney. Lung, pancreas, and gastric mucosa show a weak expression. Also expressed in certain liver and kidney carcinomas.

The protein localises to the cell membrane. In terms of biological role, cadherins are calcium-dependent cell adhesion proteins. They preferentially interact with themselves in a homophilic manner in connecting cells; cadherins may thus contribute to the sorting of heterogeneous cell types. This is Cadherin-6 (CDH6) from Homo sapiens (Human).